We begin with the raw amino-acid sequence, 157 residues long: Protein Smg homolog (157 aa).

This sequence belongs to the Smg family.

The protein is Protein Smg homolog of Photobacterium profundum (strain SS9).